We begin with the raw amino-acid sequence, 352 residues long: Popeye domain-containing protein 1 (352 aa).

Topologically, residues 1-38 are extracellular; that stretch reads MSNTTSALPSSVPAVSLDPNATLCQDWEQSHHLLFHLA. N-linked (GlcNAc...) asparagine glycosylation is found at asparagine 3 and asparagine 20. Residues 39–59 traverse the membrane as a helical segment; that stretch reads NLSLGLGFLIPTTLALHMIFL. Arginine 60 is a topological domain (cytoplasmic). The helical transmembrane segment at 61–81 threads the bilayer; sequence LLLMTGCSLFIAWATLYRCTL. Residue aspartate 82 is a topological domain, extracellular. A helical membrane pass occupies residues 83–103; sequence VMVWNVVFLLVNFMHFFFLLY. The Cytoplasmic portion of the chain corresponds to 104–352; the sequence is KRRPIKIDRE…NVSKTTKKDI (249 aa). Residues 299–352 form a disordered region; it reads ILRGGSTGSSLQKNPLTKTSTTMKPIEEGLEDDVFESESPTTSQNVSKTTKKDI. Polar residues-rich tracts occupy residues 306 to 321 and 336 to 346; these read GSSL…STTM and ESPTTSQNVSK.

Belongs to the popeye family. In terms of tissue distribution, expressed in skeletal muscle (at protein level).

The protein resides in the lateral cell membrane. The protein localises to the cell junction. It is found in the tight junction. It localises to the membrane. Its subcellular location is the cell membrane. The protein resides in the sarcolemma. The protein localises to the caveola. In terms of biological role, cell adhesion molecule involved in the establishment and/or maintenance of cell integrity. Involved in skeletal muscle and heart development as well as in the maintenance of heart function. May play a role in vamp3-mediated vesicular transport and recycling of receptor molecules. Involved in the formation and regulation of the tight junction (TJ) paracellular permeability barrier in epithelial cells. May induce primordial adhesive contact and aggregation of epithelial cells in a Ca(2+)-independent manner. May be involved in epithelial movement during corneal sheet formation and regeneration. May play a role in the regulation of cell shape and movement by modulating the Rho-GTPase activity. May also be involved in striated muscle regeneration and in the regulation of cell spreading. This chain is Popeye domain-containing protein 1 (popdc1), found in Danio rerio (Zebrafish).